A 336-amino-acid chain; its full sequence is Holliday junction branch migration complex subunit RuvB (336 aa).

Residues 4–184 (ADRLVSADSS…FGIVQRLEFY (181 aa)) are large ATPase domain (RuvB-L). ATP contacts are provided by residues I23, R24, G65, K68, T69, T70, 131-133 (EDY), R174, Y184, and R221. Residue T69 coordinates Mg(2+). A small ATPAse domain (RuvB-S) region spans residues 185–255 (QIPDLQHIVS…IAAQALDMLN (71 aa)). A head domain (RuvB-H) region spans residues 258–336 (AEGFDYMDRK…HFGITPPEMP (79 aa)). DNA-binding residues include R294, R313, and R318.

This sequence belongs to the RuvB family. Homohexamer. Forms an RuvA(8)-RuvB(12)-Holliday junction (HJ) complex. HJ DNA is sandwiched between 2 RuvA tetramers; dsDNA enters through RuvA and exits via RuvB. An RuvB hexamer assembles on each DNA strand where it exits the tetramer. Each RuvB hexamer is contacted by two RuvA subunits (via domain III) on 2 adjacent RuvB subunits; this complex drives branch migration. In the full resolvosome a probable DNA-RuvA(4)-RuvB(12)-RuvC(2) complex forms which resolves the HJ.

Its subcellular location is the cytoplasm. The enzyme catalyses ATP + H2O = ADP + phosphate + H(+). Its function is as follows. The RuvA-RuvB-RuvC complex processes Holliday junction (HJ) DNA during genetic recombination and DNA repair, while the RuvA-RuvB complex plays an important role in the rescue of blocked DNA replication forks via replication fork reversal (RFR). RuvA specifically binds to HJ cruciform DNA, conferring on it an open structure. The RuvB hexamer acts as an ATP-dependent pump, pulling dsDNA into and through the RuvAB complex. RuvB forms 2 homohexamers on either side of HJ DNA bound by 1 or 2 RuvA tetramers; 4 subunits per hexamer contact DNA at a time. Coordinated motions by a converter formed by DNA-disengaged RuvB subunits stimulates ATP hydrolysis and nucleotide exchange. Immobilization of the converter enables RuvB to convert the ATP-contained energy into a lever motion, pulling 2 nucleotides of DNA out of the RuvA tetramer per ATP hydrolyzed, thus driving DNA branch migration. The RuvB motors rotate together with the DNA substrate, which together with the progressing nucleotide cycle form the mechanistic basis for DNA recombination by continuous HJ branch migration. Branch migration allows RuvC to scan DNA until it finds its consensus sequence, where it cleaves and resolves cruciform DNA. The protein is Holliday junction branch migration complex subunit RuvB of Klebsiella pneumoniae (strain 342).